Consider the following 733-residue polypeptide: Catalase-peroxidase (733 aa).

The N-terminal stretch at Met1 to Ala23 is a signal peptide. The segment at residues Trp96–Tyr224 is a cross-link (tryptophyl-tyrosyl-methioninium (Trp-Tyr) (with M-250)). The Proton acceptor role is filled by His97. The tryptophyl-tyrosyl-methioninium (Tyr-Met) (with W-96) cross-link spans Tyr224 to Met250. Residue His265 coordinates heme b.

The protein belongs to the peroxidase family. Peroxidase/catalase subfamily. In terms of assembly, homodimer or homotetramer. Heme b is required as a cofactor. In terms of processing, formation of the three residue Trp-Tyr-Met cross-link is important for the catalase, but not the peroxidase activity of the enzyme.

It carries out the reaction H2O2 + AH2 = A + 2 H2O. It catalyses the reaction 2 H2O2 = O2 + 2 H2O. Functionally, bifunctional enzyme with both catalase and broad-spectrum peroxidase activity. In Azoarcus sp. (strain BH72), this protein is Catalase-peroxidase.